A 244-amino-acid chain; its full sequence is tRNA (guanine-N(7)-)-methyltransferase (244 aa).

Glutamate 75, glutamate 100, aspartate 127, and aspartate 150 together coordinate S-adenosyl-L-methionine. The active site involves aspartate 150. Substrate contacts are provided by residues lysine 154, aspartate 186, and 223–226 (TRFE).

This sequence belongs to the class I-like SAM-binding methyltransferase superfamily. TrmB family.

The enzyme catalyses guanosine(46) in tRNA + S-adenosyl-L-methionine = N(7)-methylguanosine(46) in tRNA + S-adenosyl-L-homocysteine. It functions in the pathway tRNA modification; N(7)-methylguanine-tRNA biosynthesis. Functionally, catalyzes the formation of N(7)-methylguanine at position 46 (m7G46) in tRNA. The chain is tRNA (guanine-N(7)-)-methyltransferase from Xylella fastidiosa (strain 9a5c).